Consider the following 455-residue polypeptide: Bifunctional protein GlmU (455 aa).

Residues 1-228 (MTQPLHVIIL…AQEAEGANDP (228 aa)) form a pyrophosphorylase region. Residues 10–13 (LAAG), Lys-24, Gln-76, 81–82 (GT), 103–105 (YGD), Gly-138, Glu-153, Asn-168, and Asn-226 each bind UDP-N-acetyl-alpha-D-glucosamine. Asp-105 contacts Mg(2+). Asn-226 is a Mg(2+) binding site. The linker stretch occupies residues 229 to 249 (WQLSQLERAWQRRAVRALCAQ). Positions 250–455 (GARVRDPARL…DGWKRPLKKS (206 aa)) are N-acetyltransferase. UDP-N-acetyl-alpha-D-glucosamine is bound by residues Arg-332 and Lys-350. The active-site Proton acceptor is His-362. The UDP-N-acetyl-alpha-D-glucosamine site is built by Tyr-365 and Asn-376. Acetyl-CoA is bound by residues Ala-379, 385 to 386 (NY), Ser-404, Ala-422, and Arg-439.

This sequence in the N-terminal section; belongs to the N-acetylglucosamine-1-phosphate uridyltransferase family. The protein in the C-terminal section; belongs to the transferase hexapeptide repeat family. As to quaternary structure, homotrimer. It depends on Mg(2+) as a cofactor.

The protein localises to the cytoplasm. The enzyme catalyses alpha-D-glucosamine 1-phosphate + acetyl-CoA = N-acetyl-alpha-D-glucosamine 1-phosphate + CoA + H(+). The catalysed reaction is N-acetyl-alpha-D-glucosamine 1-phosphate + UTP + H(+) = UDP-N-acetyl-alpha-D-glucosamine + diphosphate. It participates in nucleotide-sugar biosynthesis; UDP-N-acetyl-alpha-D-glucosamine biosynthesis; N-acetyl-alpha-D-glucosamine 1-phosphate from alpha-D-glucosamine 6-phosphate (route II): step 2/2. The protein operates within nucleotide-sugar biosynthesis; UDP-N-acetyl-alpha-D-glucosamine biosynthesis; UDP-N-acetyl-alpha-D-glucosamine from N-acetyl-alpha-D-glucosamine 1-phosphate: step 1/1. It functions in the pathway bacterial outer membrane biogenesis; LPS lipid A biosynthesis. Functionally, catalyzes the last two sequential reactions in the de novo biosynthetic pathway for UDP-N-acetylglucosamine (UDP-GlcNAc). The C-terminal domain catalyzes the transfer of acetyl group from acetyl coenzyme A to glucosamine-1-phosphate (GlcN-1-P) to produce N-acetylglucosamine-1-phosphate (GlcNAc-1-P), which is converted into UDP-GlcNAc by the transfer of uridine 5-monophosphate (from uridine 5-triphosphate), a reaction catalyzed by the N-terminal domain. The protein is Bifunctional protein GlmU of Stenotrophomonas maltophilia (strain K279a).